The following is a 485-amino-acid chain: Ribosomal protein S6 kinase beta-2 (485 aa).

Residues M1–A26 form a disordered region. Residues L7–P21 are compositionally biased toward acidic residues. A Phosphoserine modification is found at S15. One can recognise a Protein kinase domain in the interval F67–F328. ATP contacts are provided by residues L73–V81 and K99. The active-site Proton acceptor is the D194. Positions R329–K399 constitute an AGC-kinase C-terminal domain. The tract at residues K407–R485 is disordered. Position 417 is a phosphoserine (S417). At T420 the chain carries Phosphothreonine. Residue S423 is modified to Phosphoserine. Over residues S436–P469 the composition is skewed to pro residues. Positions K474–R480 match the Nuclear localization signal motif. Basic residues predominate over residues K474–R485. Position 476 is a phosphoserine; by PKC (S476).

It belongs to the protein kinase superfamily. AGC Ser/Thr protein kinase family. S6 kinase subfamily. In terms of processing, phosphorylated and activated by MTOR. Phosphorylation by PKC within the NLS in response to mitogenic stimuli causes cytoplasmic retention.

It localises to the cytoplasm. It is found in the nucleus. It carries out the reaction L-seryl-[protein] + ATP = O-phospho-L-seryl-[protein] + ADP + H(+). The enzyme catalyses L-threonyl-[protein] + ATP = O-phospho-L-threonyl-[protein] + ADP + H(+). In terms of biological role, phosphorylates specifically ribosomal protein S6. Seems to act downstream of mTOR signaling in response to growth factors and nutrients to promote cell proliferation, cell growth and cell cycle progression in an alternative pathway regulated by MEAK7. In Mus musculus (Mouse), this protein is Ribosomal protein S6 kinase beta-2 (Rps6kb2).